A 480-amino-acid polypeptide reads, in one-letter code: Aspartyl/glutamyl-tRNA(Asn/Gln) amidotransferase subunit B (480 aa).

This sequence belongs to the GatB/GatE family. GatB subfamily. In terms of assembly, heterotrimer of A, B and C subunits.

It catalyses the reaction L-glutamyl-tRNA(Gln) + L-glutamine + ATP + H2O = L-glutaminyl-tRNA(Gln) + L-glutamate + ADP + phosphate + H(+). The catalysed reaction is L-aspartyl-tRNA(Asn) + L-glutamine + ATP + H2O = L-asparaginyl-tRNA(Asn) + L-glutamate + ADP + phosphate + 2 H(+). In terms of biological role, allows the formation of correctly charged Asn-tRNA(Asn) or Gln-tRNA(Gln) through the transamidation of misacylated Asp-tRNA(Asn) or Glu-tRNA(Gln) in organisms which lack either or both of asparaginyl-tRNA or glutaminyl-tRNA synthetases. The reaction takes place in the presence of glutamine and ATP through an activated phospho-Asp-tRNA(Asn) or phospho-Glu-tRNA(Gln). This Caldicellulosiruptor bescii (strain ATCC BAA-1888 / DSM 6725 / KCTC 15123 / Z-1320) (Anaerocellum thermophilum) protein is Aspartyl/glutamyl-tRNA(Asn/Gln) amidotransferase subunit B.